A 638-amino-acid chain; its full sequence is 3D-(3,5/4)-trihydroxycyclohexane-1,2-dione hydrolase (638 aa).

Residue Glu-67 participates in thiamine diphosphate binding. Positions 442-523 (SLPGDLQRLW…INIMLFDNSG (82 aa)) are thiamine pyrophosphate binding. Mg(2+) contacts are provided by Asp-494 and Asn-521.

It belongs to the TPP enzyme family. Requires Mg(2+) as cofactor. The cofactor is thiamine diphosphate.

It carries out the reaction 3D-3,5/4-trihydroxycyclohexane-1,2-dione + H2O = 5-deoxy-D-glucuronate + H(+). It participates in polyol metabolism; myo-inositol degradation into acetyl-CoA; acetyl-CoA from myo-inositol: step 3/7. In terms of biological role, involved in the cleavage of the C1-C2 bond of 3D-(3,5/4)-trihydroxycyclohexane-1,2-dione (THcHDO) to yield 5-deoxy-glucuronate (5DG). In Listeria monocytogenes serotype 4b (strain F2365), this protein is 3D-(3,5/4)-trihydroxycyclohexane-1,2-dione hydrolase.